A 397-amino-acid polypeptide reads, in one-letter code: Bifunctional enzyme IspD/IspF (397 aa).

The segment at 1–233 (MCAKKYKIAA…KLLFEEPKFR (233 aa)) is 2-C-methyl-D-erythritol 4-phosphate cytidylyltransferase. Residues 233–397 (RVGAGYDIHK…VLLHTNFYWK (165 aa)) are 2-C-methyl-D-erythritol 2,4-cyclodiphosphate synthase. 2 residues coordinate a divalent metal cation: aspartate 239 and histidine 241. Residues 239–241 (DIH) and 270–271 (HS) contribute to the 4-CDP-2-C-methyl-D-erythritol 2-phosphate site. Histidine 278 contributes to the a divalent metal cation binding site. 4-CDP-2-C-methyl-D-erythritol 2-phosphate contacts are provided by residues 292–294 (DIG), 368–371 (TTAE), tyrosine 375, and arginine 378.

In the N-terminal section; belongs to the IspD/TarI cytidylyltransferase family. IspD subfamily. It in the C-terminal section; belongs to the IspF family. The cofactor is a divalent metal cation.

The enzyme catalyses 2-C-methyl-D-erythritol 4-phosphate + CTP + H(+) = 4-CDP-2-C-methyl-D-erythritol + diphosphate. The catalysed reaction is 4-CDP-2-C-methyl-D-erythritol 2-phosphate = 2-C-methyl-D-erythritol 2,4-cyclic diphosphate + CMP. The protein operates within isoprenoid biosynthesis; isopentenyl diphosphate biosynthesis via DXP pathway; isopentenyl diphosphate from 1-deoxy-D-xylulose 5-phosphate: step 2/6. It participates in isoprenoid biosynthesis; isopentenyl diphosphate biosynthesis via DXP pathway; isopentenyl diphosphate from 1-deoxy-D-xylulose 5-phosphate: step 4/6. Functionally, bifunctional enzyme that catalyzes the formation of 4-diphosphocytidyl-2-C-methyl-D-erythritol from CTP and 2-C-methyl-D-erythritol 4-phosphate (MEP) (IspD), and catalyzes the conversion of 4-diphosphocytidyl-2-C-methyl-D-erythritol 2-phosphate (CDP-ME2P) to 2-C-methyl-D-erythritol 2,4-cyclodiphosphate (ME-CPP) with a corresponding release of cytidine 5-monophosphate (CMP) (IspF). The chain is Bifunctional enzyme IspD/IspF from Wolbachia pipientis wMel.